Consider the following 164-residue polypeptide: Interferon gamma (164 aa).

A signal peptide spans 1–19 (MTCQTYNLFVLSVIMIYYG). N-linked (GlcNAc...) asparagine glycosylation is found at Asn-42 and Asn-61.

The protein belongs to the type II (or gamma) interferon family. As to quaternary structure, homodimer.

The protein resides in the secreted. Functionally, produced by lymphocytes activated by specific antigens or mitogens. IFN-gamma, in addition to having antiviral activity, has important immunoregulatory functions. It is a potent activator of macrophages, it has antiproliferative effects on transformed cells and it can potentiate the antiviral and antitumor effects of the type I interferons. This Phasianus colchicus colchicus (Black-necked pheasant) protein is Interferon gamma (IFNG).